Here is a 279-residue protein sequence, read N- to C-terminus: MASGLIGRLVGTKPSKLATAARLIPARWTSTGAEAETKASSGGGRGSNLKTFQIYRWNPDNPGKPELQNYQIDLKDCGPMVLDALIKIKNEMDPSLTFRRSCREGICGSCAMNIDGCNGLACLTKIQDEASETTITPLPHMFVIKDLVVDMTNFYNQYKSIEPWLKRKTPASVPAKEILQSKKDRAKLDGMYECILCACCSTSCPSYWWNPESYLGPAALLHANRWISDSRDEYTKERLEAIDDEFKLYRCHTILNCARACPKGLNPGKQITHIKQLQR.

The transit peptide at 1 to 28 (MASGLIGRLVGTKPSKLATAARLIPARW) directs the protein to the mitochondrion. The 2Fe-2S ferredoxin-type domain occupies 52–141 (FQIYRWNPDN…ETTITPLPHM (90 aa)). [2Fe-2S] cluster contacts are provided by Cys102, Cys107, and Cys122. A 4Fe-4S ferredoxin-type domain is found at 184–214 (DRAKLDGMYECILCACCSTSCPSYWWNPESY). Positions 194, 197, and 200 each coordinate [4Fe-4S] cluster. Cys204 is a binding site for [3Fe-4S] cluster. Trp209 contributes to the a ubiquinone binding site. [3Fe-4S] cluster-binding residues include Cys251 and Cys257. Residue Cys261 coordinates [4Fe-4S] cluster.

The protein belongs to the succinate dehydrogenase/fumarate reductase iron-sulfur protein family. Component of complex II composed of eight subunits in plants: four classical SDH subunits SDH1, SDH2, SDH3 and SDH4 (a flavoprotein (FP), an iron-sulfur protein (IP), and a cytochrome b composed of a large and a small subunit.), as well as four subunits unknown in mitochondria from bacteria and heterotrophic eukaryotes. The cofactor is [2Fe-2S] cluster. [3Fe-4S] cluster serves as cofactor. It depends on [4Fe-4S] cluster as a cofactor. In terms of tissue distribution, ubiquitous. Preferentially expressed in flowers and inflorescences.

The protein localises to the mitochondrion inner membrane. The catalysed reaction is a quinone + succinate = fumarate + a quinol. It participates in carbohydrate metabolism; tricarboxylic acid cycle; fumarate from succinate (eukaryal route): step 1/1. Iron-sulfur protein (IP) subunit of succinate dehydrogenase (SDH) that is involved in complex II of the mitochondrial electron transport chain and is responsible for transferring electrons from succinate to ubiquinone (coenzyme Q). This Arabidopsis thaliana (Mouse-ear cress) protein is Succinate dehydrogenase [ubiquinone] iron-sulfur subunit 1, mitochondrial (SDH2-1).